The following is a 193-amino-acid chain: uncharacterized protein (193 aa).

The first 22 residues, 1-22, serve as a signal peptide directing secretion; sequence MAVQKNVIKGILAGTFALMLSG. Residue Cys-23 is the site of N-palmitoyl cysteine attachment. Residue Cys-23 is the site of S-diacylglycerol cysteine attachment.

The protein resides in the cell membrane. This is an uncharacterized protein from Escherichia coli (strain K12).